The chain runs to 120 residues: Large ribosomal subunit protein uL18 (120 aa).

This sequence belongs to the universal ribosomal protein uL18 family. As to quaternary structure, part of the 50S ribosomal subunit; part of the 5S rRNA/L5/L18/L25 subcomplex. Contacts the 5S and 23S rRNAs.

Functionally, this is one of the proteins that bind and probably mediate the attachment of the 5S RNA into the large ribosomal subunit, where it forms part of the central protuberance. The sequence is that of Large ribosomal subunit protein uL18 from Treponema pallidum (strain Nichols).